The following is a 602-amino-acid chain: Exo-poly-alpha-D-galacturonosidase (602 aa).

Positions 1-27 are cleaved as a signal peptide; the sequence is MKVITFSRRSALASIVATCLMSTPALA. One can recognise a Fibronectin type-III domain in the interval 32-149; the sequence is APQKLQIPTL…TVTTTTTAVP (118 aa). The active-site Proton donor is the D395. The active site involves H428.

Belongs to the glycosyl hydrolase 28 family.

It is found in the secreted. The enzyme catalyses [(1-&gt;4)-alpha-D-galacturonosyl](n) + H2O = alpha-D-galacturonosyl-(1-&gt;4)-D-galacturonate + [(1-&gt;4)-alpha-D-galacturonosyl](n-2). Its function is as follows. Contributes significantly to bacterial utilization of polygalacturonate and the induction of pectate lyase in the presence of extracellular pectic polymers. In Dickeya chrysanthemi (Pectobacterium chrysanthemi), this protein is Exo-poly-alpha-D-galacturonosidase (pehX).